The following is a 2124-amino-acid chain: AMB antimetabolite synthetase AmbE (2124 aa).

An adenylation region spans residues 456-847; that stretch reads LRAALQPQAP…LGRIDEQVKI (392 aa). The methyltransferase stretch occupies residues 950–1147; the sequence is DVGANIGLFS…DLLRRHGFEV (198 aa). Residues 1251-1325 enclose the Carrier 1 domain; it reads APANATEAAL…ELARLLAAPA (75 aa). Ser1286 carries the post-translational modification O-(pantetheine 4'-phosphoryl)serine. The segment at 1359–1780 is condensation; the sequence is DAYPMTSLQQ…ALLGDPVQPP (422 aa). One can recognise a Carrier 2 domain in the interval 1785–1859; sequence AEDSVELRRV…EVVRRCHAAD (75 aa). The residue at position 1819 (Ser1819) is an O-(pantetheine 4'-phosphoryl)serine. A thioesterase region spans residues 1886–2107; sequence RLIALPPAGG…AAEEVCAILR (222 aa).

This sequence belongs to the NRP synthetase family. It depends on pantetheine 4'-phosphate as a cofactor.

It carries out the reaction holo-[peptidyl-carrier protein] + L-glutamate + ATP = L-glutamyl-[peptidyl-carrier protein] + AMP + diphosphate. Its function is as follows. Involved in the biosynthesis of the antimetabolite L-2-amino-4-methoxy-trans-3-butenoic acid (AMB), a non-proteinogenic amino acid which is toxic for prokaryotes and eukaryotes. Adenylates L-glutamate and loads it onto its first peptidyl carrier domain via a thioester linkage to the phosphopanthetheine moiety. The second peptidyl carrier domain is loaded with a L-alanine activated by AmbB. After formation by AmbB of the L-Glu-L-Ala dipeptide at the first carrier domain of AmbE, the condensation domain of AmbE probably condenses this dipeptide with the L-Ala residue attached at the second carrier domain of AmbE to give the L-Ala-L-Glu-L-Ala tripeptide. The central amino acid, L-Glu, would then undergo a series of modifications to be converted into AMB while the two flanking L-Ala residues remain in place. Finally, the L-Ala-AMB-L-Ala tripeptide is probably released by thioester cleavage via the thioester domain of AmbE. This chain is AMB antimetabolite synthetase AmbE, found in Pseudomonas aeruginosa (strain ATCC 15692 / DSM 22644 / CIP 104116 / JCM 14847 / LMG 12228 / 1C / PRS 101 / PAO1).